Here is a 402-residue protein sequence, read N- to C-terminus: Chorismate synthase (402 aa).

Positions 40 and 46 each coordinate NADP(+). FMN is bound by residues 134–136, 255–256, G299, 314–318, and R340; these read RAS, QA, and KPIAT.

It belongs to the chorismate synthase family. As to quaternary structure, homotetramer. FMNH2 serves as cofactor.

It catalyses the reaction 5-O-(1-carboxyvinyl)-3-phosphoshikimate = chorismate + phosphate. The protein operates within metabolic intermediate biosynthesis; chorismate biosynthesis; chorismate from D-erythrose 4-phosphate and phosphoenolpyruvate: step 7/7. Catalyzes the anti-1,4-elimination of the C-3 phosphate and the C-6 proR hydrogen from 5-enolpyruvylshikimate-3-phosphate (EPSP) to yield chorismate, which is the branch point compound that serves as the starting substrate for the three terminal pathways of aromatic amino acid biosynthesis. This reaction introduces a second double bond into the aromatic ring system. This Leifsonia xyli subsp. xyli (strain CTCB07) protein is Chorismate synthase.